The primary structure comprises 644 residues: Chaperone protein DnaK (644 aa).

A Phosphothreonine; by autocatalysis modification is found at Thr-199. Residues 605-644 (KKSSEGQAAQGQTQSQESTKPAEEGVVDAEFEEVKEEDKK) are disordered. Residues 609 to 623 (EGQAAQGQTQSQEST) are compositionally biased toward polar residues. The span at 629-644 (GVVDAEFEEVKEEDKK) shows a compositional bias: acidic residues.

It belongs to the heat shock protein 70 family.

Acts as a chaperone. This chain is Chaperone protein DnaK, found in Legionella pneumophila subsp. pneumophila (strain Philadelphia 1 / ATCC 33152 / DSM 7513).